The sequence spans 450 residues: UDP-N-acetylmuramoylalanine--D-glutamate ligase (450 aa).

115-121 contacts ATP; the sequence is GTNGKTT.

Belongs to the MurCDEF family.

Its subcellular location is the cytoplasm. The enzyme catalyses UDP-N-acetyl-alpha-D-muramoyl-L-alanine + D-glutamate + ATP = UDP-N-acetyl-alpha-D-muramoyl-L-alanyl-D-glutamate + ADP + phosphate + H(+). The protein operates within cell wall biogenesis; peptidoglycan biosynthesis. Its function is as follows. Cell wall formation. Catalyzes the addition of glutamate to the nucleotide precursor UDP-N-acetylmuramoyl-L-alanine (UMA). The sequence is that of UDP-N-acetylmuramoylalanine--D-glutamate ligase from Lachnospira eligens (strain ATCC 27750 / DSM 3376 / VPI C15-48 / C15-B4) (Eubacterium eligens).